Consider the following 636-residue polypeptide: p-hydroxybenzoate-m-hydroxylase (636 aa).

FAD-binding positions include 11–40 (DIVI…HIDN), 242–244 (RLY), tyrosine 290, and aspartate 311. Residues 12–33 (IVIVGAGPVGILLSLCMSRWGY) traverse the membrane as a helical segment. Residue asparagine 573 is glycosylated (N-linked (GlcNAc...) asparagine).

This sequence belongs to the PheA/TfdB FAD monooxygenase family. It depends on FAD as a cofactor.

Its subcellular location is the membrane. The enzyme catalyses 4-hydroxybenzoate + NADH + O2 + H(+) = 3,4-dihydroxybenzoate + NAD(+) + H2O. It catalyses the reaction 4-hydroxybenzoate + NADPH + O2 + H(+) = 3,4-dihydroxybenzoate + NADP(+) + H2O. Its function is as follows. FAD-dependent monooxygenase; part of the benzoic acid degradation pathway also known as the protocatechuic acid pathway. Benzoic acid debradation begins with the conversion of benzoic acid into 4-hydroxybenzoic acid through hydroxylation by the benzoate-4-monooxygenase bphA, and its partner NADPH-cytochrome P450 reductase cprA which act as a mediator in electron donation from NADPH. 4-Hydroxybenzoic acid is then converted into 3,4-dihydroxybenzoic acid (also called protocatechuic acid) by the p-hydroxybenzoate-m-hydroxylase phhA. Protocatechuic acid is converted into 3-carboxy-cis,cis-muconic acid by the intradiol ring-cleavage dioxygenase prcA, which is further metabolized through the 3-oxoadipate pathway to finally enter the tricarboxylic acid cycle (TCA). This Emericella nidulans (strain FGSC A4 / ATCC 38163 / CBS 112.46 / NRRL 194 / M139) (Aspergillus nidulans) protein is p-hydroxybenzoate-m-hydroxylase.